Consider the following 623-residue polypeptide: uncharacterized protein (623 aa).

The next 5 membrane-spanning stretches (helical) occupy residues 242 to 262 (IALALMILALLLGLRKLITWL), 288 to 308 (IVSPVSVFLALFSCDVALDIF), 318 to 338 (VSMWVGAVYIMLLAWLVIALF), 361 to 381 (VINLILKVVYFLIFIVALLGV), and 387 to 407 (FNVSAIIASLGIGGLAVALAV).

It belongs to the MscS (TC 1.A.23) family.

It localises to the cell membrane. This is an uncharacterized protein from Helicobacter pylori (strain J99 / ATCC 700824) (Campylobacter pylori J99).